Consider the following 374-residue polypeptide: tRNA-specific 2-thiouridylase MnmA (374 aa).

ATP is bound by residues 17 to 24 and methionine 43; that span reads GMSGGVDS. The tract at residues 103 to 105 is interaction with target base in tRNA; it reads NPD. Cysteine 108 functions as the Nucleophile in the catalytic mechanism. Cysteines 108 and 204 form a disulfide. Residue glycine 132 participates in ATP binding. The tract at residues 154–156 is interaction with tRNA; that stretch reads KDQ. Cysteine 204 serves as the catalytic Cysteine persulfide intermediate. The interaction with tRNA stretch occupies residues 316 to 317; sequence RY.

The protein belongs to the MnmA/TRMU family.

It is found in the cytoplasm. It carries out the reaction S-sulfanyl-L-cysteinyl-[protein] + uridine(34) in tRNA + AH2 + ATP = 2-thiouridine(34) in tRNA + L-cysteinyl-[protein] + A + AMP + diphosphate + H(+). Its function is as follows. Catalyzes the 2-thiolation of uridine at the wobble position (U34) of tRNA, leading to the formation of s(2)U34. The chain is tRNA-specific 2-thiouridylase MnmA from Pseudomonas entomophila (strain L48).